The chain runs to 62 residues: Large ribosomal subunit protein uL30 (62 aa).

The protein belongs to the universal ribosomal protein uL30 family. In terms of assembly, part of the 50S ribosomal subunit.

This Prosthecochloris aestuarii (strain DSM 271 / SK 413) protein is Large ribosomal subunit protein uL30.